We begin with the raw amino-acid sequence, 1242 residues long: Insulin receptor substrate 1 (1242 aa).

Ser-3 is modified (phosphoserine). A mediates interaction with PHIP region spans residues 3-137; the sequence is SPPESDGFSD…GAGGGGGSCS (135 aa). The PH domain occupies 12-115; it reads DVRKVGYLRK…WYQALLQLHN (104 aa). At Ser-99 the chain carries Phosphoserine; by CK2. The IRS-type PTB domain maps to 160–264; that stretch reads FKEVWQVILK…EAMRAMSDEF (105 aa). The interval 262–430 is disordered; sequence DEFRPRSKSQ…SDGGFISSDE (169 aa). A compositionally biased stretch (low complexity) spans 269-281; the sequence is KSQSSSNCSNPIS. Phosphoserine; by RPS6KB1 is present on residues Ser-270 and Ser-307. Ser-312 bears the Phosphoserine; by IKKB, MAPK8 and RPS6KB1 mark. Phosphoserine occurs at positions 315, 323, 330, 345, and 348. Residues 354–363 show a composition bias toward basic residues; sequence THAHRHRGSA. 2 stretches are compositionally biased toward low complexity: residues 383–404 and 412–424; these read SPSA…GSTS and SSAS…SDGG. Ser-419 is modified (phosphoserine). Thr-446 and Thr-453 each carry phosphothreonine. The residue at position 465 (Tyr-465) is a Phosphotyrosine; by INSR. The YXXM motif 1 motif lies at 465–468; it reads YICM. Ser-527 is modified (phosphoserine; by RPS6KB1). Residues 551–554 carry the YXXM motif 2 motif; that stretch reads YTEM. Residues 592–610 are compositionally biased toward basic and acidic residues; sequence LERRGGHHRPDSSTLHTDD. A disordered region spans residues 592–616; the sequence is LERRGGHHRPDSSTLHTDDGYMPMS. Tyr-612 carries the phosphotyrosine; by INSR modification. Residues 612–615 carry the YXXM motif 3 motif; sequence YMPM. 2 positions are modified to phosphoserine: Ser-616 and Ser-629. Phosphotyrosine; by INSR is present on Tyr-632. The YXXM motif 4 signature appears at 632–635; that stretch reads YMPM. Ser-636 carries the phosphoserine; by RPS6KB1 modification. Residue Tyr-662 is modified to Phosphotyrosine. Residues 662 to 665 carry the YXXM motif 5 motif; sequence YMMM. A disordered region spans residues 668-693; that stretch reads SGGCSPDIGGGPSSSSSSSNAVPSGT. The short motif at 732–735 is the YXXM motif 6 element; that stretch reads YMNM. Disordered regions lie at residues 771 to 900 and 918 to 937; these read FKHT…VNIE and SPSV…EETG. Positions 776–785 are enriched in basic and acidic residues; the sequence is RPGEPEEGAR. At Ser-794 the chain carries Phosphoserine; by AMPK and SIK2. Residues 801-815 show a composition bias toward low complexity; sequence AATADDSSSSTSSDS. Ser-892 is subject to Phosphoserine. A Phosphotyrosine; by INSR modification is found at Tyr-896. Residues 896 to 898 form a GRB2-binding region; it reads YVN. A compositionally biased stretch (polar residues) spans 918-928; it reads SPSVRCPSQLQ. Phosphotyrosine; by INSR occurs at positions 941 and 989. Short sequence motifs (YXXM motif) lie at residues 941–944, 989–992, and 1012–1015; these read YMKM, YMTM, and YADM. The interval 1057–1146 is disordered; sequence SSLLGGPQGP…DVKRHSSASF (90 aa). A compositionally biased stretch (polar residues) spans 1073–1085; the sequence is TRVNLSPNRNQSA. The residue at position 1100 (Ser-1100) is a Phosphoserine. Ser-1101 carries the post-translational modification Phosphoserine; by RPS6KB1 and PKC/PRKCQ. The segment covering 1102-1114 has biased composition (polar residues); it reads ETFSSTPSATRVG. Position 1179 is a phosphotyrosine; by INSR (Tyr-1179). Residues Lys-1186 and Lys-1189 each participate in a glycyl lysine isopeptide (Lys-Gly) (interchain with G-Cter in ubiquitin) cross-link. A disordered region spans residues 1190–1242; sequence QCPQECTPEPQPPPPPPPHQPLGSGESSSTRRSSEDLSAYASISFQKQPEDRQ. Positions 1198–1209 are enriched in pro residues; it reads EPQPPPPPPPHQ. Residues 1210–1220 show a composition bias toward low complexity; that stretch reads PLGSGESSSTR. Tyr-1229 is modified (phosphotyrosine; by INSR).

Interacts with UBTF and PIK3CA. Interacts (via phosphorylated YXXM motifs) with PIK3R1. Interacts with ROCK1 and FER. Interacts (via PH domain) with PHIP. Interacts with GRB2. Interacts with SOCS7. Interacts (via IRS-type PTB domain) with IGF1R and INSR (via the tyrosine-phosphorylated NPXY motif). Interacts with ALK. Interacts with EIF2AK2/PKR. Interacts with GKAP1. Interacts with DGKZ in the absence of insulin; insulin stimulation decreases this interaction. Found in a ternary complex with DGKZ and PIP5K1A in the absence of insulin stimulation. Interacts with SQSTM1; the interaction is disrupted by the presence of tensin TNS2. Interacts with NCK1 (via SH2 domain). Interacts with NCK2 (via SH3 domain). Interacts with SH2B1; this interaction enhances leptin-induced activation of the PI3-kinase pathway. Interacts with DVL2; this interaction promotes the Wnt/beta-catenin signaling pathway. Serine phosphorylation of IRS1 is a mechanism for insulin resistance. Ser-307, Ser-312, Ser-315, and Ser-323 phosphorylations inhibit insulin action through disruption of IRS1 interaction with the insulin receptor INSR. Phosphorylation of Tyr-896 is required for GRB2-binding. Phosphorylated by ALK. Phosphorylated at Ser-270, Ser-307, Ser-636 and Ser-1101 by RPS6KB1; phosphorylation induces accelerated degradation of IRS1. Phosphorylated on tyrosine residues in response to insulin. In skeletal muscles, dephosphorylated on Tyr-612 by TNS2 under anabolic conditions; dephosphorylation results in the proteasomal degradation of IRS1. In terms of processing, ubiquitinated by the Cul7-RING(FBXW8) complex in a mTOR-dependent manner, leading to its degradation: the Cul7-RING(FBXW8) complex recognizes and binds IRS1 previously phosphorylated by S6 kinase (RPS6KB1 or RPS6KB2). Ubiquitinated by TRAF4 through 'Lys-29' linkage; this ubiquitination regulates the interaction of IRS1 with IGFR and IRS1 tyrosine phosphorylation upon IGF1 stimulation. Post-translationally, S-nitrosylation at by BLVRB inhibits its activity.

It is found in the cytoplasm. The protein localises to the nucleus. Its function is as follows. Signaling adapter protein that participates in the signal transduction from two prominent receptor tyrosine kinases, insulin receptor/INSR and insulin-like growth factor I receptor/IGF1R. Plays therefore an important role in development, growth, glucose homeostasis as well as lipid metabolism. Upon phosphorylation by the insulin receptor, functions as a signaling scaffold that propagates insulin action through binding to SH2 domain-containing proteins including the p85 regulatory subunit of PI3K, NCK1, NCK2, GRB2 or SHP2. Recruitment of GRB2 leads to the activation of the guanine nucleotide exchange factor SOS1 which in turn triggers the Ras/Raf/MEK/MAPK signaling cascade. Activation of the PI3K/AKT pathway is responsible for most of insulin metabolic effects in the cell, and the Ras/Raf/MEK/MAPK is involved in the regulation of gene expression and in cooperation with the PI3K pathway regulates cell growth and differentiation. Acts a positive regulator of the Wnt/beta-catenin signaling pathway through suppression of DVL2 autophagy-mediated degradation leading to cell proliferation. The protein is Insulin receptor substrate 1 (IRS1) of Homo sapiens (Human).